A 133-amino-acid chain; its full sequence is Ribonuclease VapC29 (133 aa).

The PINc domain occupies 3 to 122 (VLLDANVLIA…TLDSGLAHLH (120 aa)). Mg(2+) is bound by residues D6 and D97.

This sequence belongs to the PINc/VapC protein family. Mg(2+) is required as a cofactor.

In terms of biological role, toxic component of a type II toxin-antitoxin (TA) system. Its cognate antitoxin is VapB29. Has ribonuclease activity. The protein is Ribonuclease VapC29 of Mycobacterium tuberculosis (strain CDC 1551 / Oshkosh).